The chain runs to 216 residues: Flavin-dependent thymidylate synthase (216 aa).

The region spanning 9–206 (GFVELVDVMG…PWTYEAFIKY (198 aa)) is the ThyX domain. Residues S55, 78 to 80 (RHR), and E86 contribute to the FAD site. Residues 75–78 (QWFR), 86–90 (ELSGR), and R145 each bind dUMP. Residues 78–88 (RHRIASYNELS) carry the ThyX motif motif. FAD-binding positions include 161–163 (NAR) and N167. R172 is a dUMP binding site. The active-site Involved in ionization of N3 of dUMP, leading to its activation is R172.

It belongs to the thymidylate synthase ThyX family. In terms of assembly, homotetramer. It depends on FAD as a cofactor.

The enzyme catalyses dUMP + (6R)-5,10-methylene-5,6,7,8-tetrahydrofolate + NADPH + H(+) = dTMP + (6S)-5,6,7,8-tetrahydrofolate + NADP(+). The protein operates within pyrimidine metabolism; dTTP biosynthesis. In terms of biological role, catalyzes the reductive methylation of 2'-deoxyuridine-5'-monophosphate (dUMP) to 2'-deoxythymidine-5'-monophosphate (dTMP) while utilizing 5,10-methylenetetrahydrofolate (mTHF) as the methyl donor, and NADPH and FADH(2) as the reductant. The chain is Flavin-dependent thymidylate synthase from Thermotoga neapolitana (strain ATCC 49049 / DSM 4359 / NBRC 107923 / NS-E).